Consider the following 1373-residue polypeptide: DNA-directed RNA polymerase subunit beta (1373 aa).

The protein belongs to the RNA polymerase beta chain family. In terms of assembly, the RNAP catalytic core consists of 2 alpha, 1 beta, 1 beta' and 1 omega subunit. When a sigma factor is associated with the core the holoenzyme is formed, which can initiate transcription.

The catalysed reaction is RNA(n) + a ribonucleoside 5'-triphosphate = RNA(n+1) + diphosphate. DNA-dependent RNA polymerase catalyzes the transcription of DNA into RNA using the four ribonucleoside triphosphates as substrates. This Lawsonia intracellularis (strain PHE/MN1-00) protein is DNA-directed RNA polymerase subunit beta.